The chain runs to 352 residues: Histidine biosynthesis bifunctional protein HisB (352 aa).

The tract at residues 1-164 (MSQKILFIDR…EIENEILSSF (164 aa)) is histidinol-phosphatase. Residue Asp-9 is the Nucleophile of the active site. Residues Asp-9 and Asp-11 each contribute to the Mg(2+) site. Asp-11 functions as the Proton donor in the catalytic mechanism. Zn(2+) contacts are provided by Cys-93, His-95, Cys-101, and Cys-103. Mg(2+) is bound at residue Asp-130. An imidazoleglycerol-phosphate dehydratase region spans residues 165–352 (RSASYQRTTK…ENLASSKGVI (188 aa)).

This sequence in the N-terminal section; belongs to the histidinol-phosphatase family. The protein in the C-terminal section; belongs to the imidazoleglycerol-phosphate dehydratase family. The cofactor is Mg(2+). Zn(2+) is required as a cofactor.

The protein resides in the cytoplasm. The enzyme catalyses D-erythro-1-(imidazol-4-yl)glycerol 3-phosphate = 3-(imidazol-4-yl)-2-oxopropyl phosphate + H2O. The catalysed reaction is L-histidinol phosphate + H2O = L-histidinol + phosphate. The protein operates within amino-acid biosynthesis; L-histidine biosynthesis; L-histidine from 5-phospho-alpha-D-ribose 1-diphosphate: step 6/9. It functions in the pathway amino-acid biosynthesis; L-histidine biosynthesis; L-histidine from 5-phospho-alpha-D-ribose 1-diphosphate: step 8/9. This chain is Histidine biosynthesis bifunctional protein HisB, found in Campylobacter jejuni subsp. jejuni serotype O:6 (strain 81116 / NCTC 11828).